The chain runs to 90 residues: Nodulation protein NolS (90 aa).

Its function is as follows. Involved in nodulation of a particular host, M.lupulina. The protein is Nodulation protein NolS (nolS) of Sinorhizobium meliloti (strain Sm2011 / Rm2011 / 2011).